Reading from the N-terminus, the 252-residue chain is Probable transcriptional regulatory protein Kole_1935 (252 aa).

This sequence belongs to the TACO1 family.

The protein resides in the cytoplasm. The polypeptide is Probable transcriptional regulatory protein Kole_1935 (Kosmotoga olearia (strain ATCC BAA-1733 / DSM 21960 / TBF 19.5.1)).